Consider the following 251-residue polypeptide: DNA repair protein RecO (251 aa).

It belongs to the RecO family.

Involved in DNA repair and RecF pathway recombination. This is DNA repair protein RecO from Staphylococcus saprophyticus subsp. saprophyticus (strain ATCC 15305 / DSM 20229 / NCIMB 8711 / NCTC 7292 / S-41).